A 153-amino-acid chain; its full sequence is H/ACA ribonucleoprotein complex subunit 2 (153 aa).

A Glycyl lysine isopeptide (Lys-Gly) (interchain with G-Cter in SUMO2) cross-link involves residue Lys-3. Lys-5 is covalently cross-linked (Glycyl lysine isopeptide (Lys-Gly) (interchain with G-Cter in SUMO); alternate). Lys-5 participates in a covalent cross-link: Glycyl lysine isopeptide (Lys-Gly) (interchain with G-Cter in SUMO1); alternate. Residue Lys-5 forms a Glycyl lysine isopeptide (Lys-Gly) (interchain with G-Cter in SUMO2); alternate linkage.

It belongs to the eukaryotic ribosomal protein eL8 family. As to quaternary structure, part of the H/ACA small nucleolar ribonucleoprotein (H/ACA snoRNP) complex, which contains NHP2/NOLA2, GAR1/NOLA1, NOP10/NOLA3, and DKC1/NOLA4, which is presumed to be the catalytic subunit. The complex contains a stable core formed by binding of one or two NOP10-DKC1 heterodimers to NHP2; GAR1 subsequently binds to this core via DKC1. The complex binds a box H/ACA small nucleolar RNA (snoRNA), which may target the specific site of modification within the RNA substrate. During assembly, the complex contains NAF1 instead of GAR1/NOLA1. The complex also interacts with TERC, which contains a 3'-terminal domain related to the box H/ACA snoRNAs. Specific interactions with snoRNAs or TERC are mediated by GAR1 and NHP2. Associates with NOLC1/NOPP140. H/ACA snoRNPs interact with the SMN complex, consisting of SMN1 or SMN2, GEMIN2/SIP1, DDX20/GEMIN3, and GEMIN4. This is mediated by interaction between GAR1 and SMN1 or SMN2. The SMN complex may be required for correct assembly of the H/ACA snoRNP complex. Component of the telomerase holoenzyme complex composed of one molecule of TERT, one molecule of WRAP53/TCAB1, two molecules of H/ACA ribonucleoprotein complex subunits DKC1, NOP10, NHP2 and GAR1, and a telomerase RNA template component (TERC). The telomerase holoenzyme complex is associated with TEP1, SMG6/EST1A and POT1.

The protein resides in the nucleus. It localises to the nucleolus. Its subcellular location is the cajal body. Functionally, required for ribosome biogenesis and telomere maintenance. Part of the H/ACA small nucleolar ribonucleoprotein (H/ACA snoRNP) complex, which catalyzes pseudouridylation of rRNA. This involves the isomerization of uridine such that the ribose is subsequently attached to C5, instead of the normal N1. Each rRNA can contain up to 100 pseudouridine ('psi') residues, which may serve to stabilize the conformation of rRNAs. May also be required for correct processing or intranuclear trafficking of TERC, the RNA component of the telomerase reverse transcriptase (TERT) holoenzyme. This Bos taurus (Bovine) protein is H/ACA ribonucleoprotein complex subunit 2 (NHP2).